Consider the following 100-residue polypeptide: Urease subunit gamma (100 aa).

This sequence belongs to the urease gamma subunit family. In terms of assembly, heterotrimer of UreA (gamma), UreB (beta) and UreC (alpha) subunits. Three heterotrimers associate to form the active enzyme.

The protein resides in the cytoplasm. It carries out the reaction urea + 2 H2O + H(+) = hydrogencarbonate + 2 NH4(+). It participates in nitrogen metabolism; urea degradation; CO(2) and NH(3) from urea (urease route): step 1/1. This chain is Urease subunit gamma, found in Pseudomonas fluorescens (strain ATCC BAA-477 / NRRL B-23932 / Pf-5).